A 131-amino-acid chain; its full sequence is Fimbrial assembly protein, serogroups C1 and C2 (131 aa).

This chain is Fimbrial assembly protein, serogroups C1 and C2 (fimB), found in Dichelobacter nodosus (Bacteroides nodosus).